A 95-amino-acid chain; its full sequence is Putative defensin-like protein 262 (95 aa).

Residues 1–26 (MEKTSLKLIFLFSLTVIAFCSSLGDA) form the signal peptide. Intrachain disulfides connect C48-C95, C64-C83, C70-C91, and C74-C93.

Belongs to the DEFL family.

The protein localises to the secreted. This is Putative defensin-like protein 262 from Arabidopsis thaliana (Mouse-ear cress).